Here is a 189-residue protein sequence, read N- to C-terminus: dCTP deaminase (189 aa).

DCTP is bound by residues 112-117 (KSTYAR), 136-138 (TLE), glutamine 157, tyrosine 171, and glutamine 181. Glutamate 138 (proton donor/acceptor) is an active-site residue.

It belongs to the dCTP deaminase family. In terms of assembly, homotrimer.

The catalysed reaction is dCTP + H2O + H(+) = dUTP + NH4(+). It participates in pyrimidine metabolism; dUMP biosynthesis; dUMP from dCTP (dUTP route): step 1/2. Its function is as follows. Catalyzes the deamination of dCTP to dUTP. The chain is dCTP deaminase from Leptothrix cholodnii (strain ATCC 51168 / LMG 8142 / SP-6) (Leptothrix discophora (strain SP-6)).